A 120-amino-acid chain; its full sequence is UPF0231 protein KPK_4613 (120 aa).

It belongs to the UPF0231 family.

In Klebsiella pneumoniae (strain 342), this protein is UPF0231 protein KPK_4613.